The sequence spans 687 residues: Chloride channel protein ClC-Ka (687 aa).

The next 4 helical transmembrane spans lie at 52 to 72, 161 to 181, 202 to 222, and 236 to 256; these read FLMT…FALG, LFLG…AYLG, VAGA…GVLF, and YWRG…LAVF. 4 residues coordinate Ca(2+): Glu259, Glu261, Asp278, and Glu281. A run of 6 helical transmembrane segments spans residues 282–302, 325–345, 396–416, 417–437, 452–472, and 486–506; these read IFFF…YLYC, PLYA…PGVG, FTIF…LILA, TTIP…AAIG, IVAG…AGAA, and LLAF…MAVL. Residues 507–687 are Cytoplasmic-facing; it reads AANAIAQSCQ…SALTNPPPAK (181 aa). CBS domains are found at residues 551 to 612 and 628 to 686; these read MRRA…ARAS and TEPV…PPPA.

Belongs to the chloride channel (TC 2.A.49) family. CLCNKA subfamily. As to quaternary structure, homodimer. Interacts with BSND. As to expression, expressed predominantly in the kidney.

It is found in the basolateral cell membrane. The catalysed reaction is chloride(in) = chloride(out). It catalyses the reaction bromide(in) = bromide(out). The enzyme catalyses nitrate(in) = nitrate(out). It carries out the reaction iodide(out) = iodide(in). In terms of biological role, anion-selective channel permeable to small monovalent anions with ion selectivity for chloride &gt; bromide &gt; nitrate &gt; iodide. Forms a homodimeric channel where each subunit has its own ion conduction pathway. May conduct double-barreled currents controlled by two types of gates, two fast gates that control each subunit independently and a slow common gate that opens and shuts off both subunits simultaneously. Assembles with the regulatory subunit BSND/Barttin for sorting at the basolateral plasma membrane domain and functional switch to the ion conducting state. CLCNKA:BSND channels display mostly a linear current-voltage relationship with fast gating at negative potentials. Mediates transepithelial chloride transport from the lumen to interstitial compartment along the thin ascending limb of Henle's loop, contributing to generation of hypertonic medullary interstitium as a countercurrent system to achieve urine concentration. Conducts chloride currents in the stria vascularis of the inner ear to establish the endocochlear potential necessary for normal hearing. The sequence is that of Chloride channel protein ClC-Ka (CLCNKA) from Oryctolagus cuniculus (Rabbit).